The following is a 92-amino-acid chain: Islet amyloid polypeptide (92 aa).

An N-terminal signal peptide occupies residues 1–22 (MHISKLPAALLIFSVALNHLKA). Positions 23–34 (TPVRSGTNHQMD) are excised as a propeptide. A disulfide bridge connects residues cysteine 38 and cysteine 43. Tyrosine 73 is subject to Tyrosine amide. Positions 77–92 (SAAEIPDGDSLDLFLL) are excised as a propeptide.

This sequence belongs to the calcitonin family. Can form homodimers. Interacts with IDE and INS. Interaction with INS inhibits homodimerization and fibril formation.

Its subcellular location is the secreted. Its function is as follows. Amylin/IAPP is a glucoregulatory peptide hormone that plays an important role in the regulation of energy homeostasis. Selectively inhibits insulin-stimulated glucose utilization and glycogen deposition in muscle, while not affecting adipocyte glucose metabolism. IAPP function is mediated by the CALCR-RAMPs (AMYRs) receptor complexes. Amylin can also bind CALCR receptor in the absence of RAMPs, although it is more selective for AMYRs. The polypeptide is Islet amyloid polypeptide (IAPP) (Mesocricetus auratus (Golden hamster)).